A 331-amino-acid polypeptide reads, in one-letter code: Probable serine hydrolase (331 aa).

The tract at residues 1 to 28 (MGQTRVAATTAAQSPAAELSPETNGQTE) is disordered. Residues 7–17 (AATTAAQSPAA) show a composition bias toward low complexity. Residues 63-163 (PIIALHGWQD…EVEKLINIDI (101 aa)) enclose the AB hydrolase-1 domain. Residue S138 is part of the active site.

It belongs to the AB hydrolase superfamily. Ubiquitously expressed before embryonic stage 11. At stage 11, expression is concentrated in the foregut and posterior midgut. By stage 15, in gastric caeca, pharynx, posterior spiracles and anterior edge of midgut. At the end of embryogenesis, expression is confined to gastric caeca. During third instar larvae, expressed at low levels in gastric caeca, midgut and hindgut and high level in fat body.

In terms of biological role, may have a role in detoxification and digestion during embryogenesis and larval development. The chain is Probable serine hydrolase (kraken) from Drosophila melanogaster (Fruit fly).